Reading from the N-terminus, the 325-residue chain is Tetraacyldisaccharide 4'-kinase (325 aa).

Residue 55 to 62 (TAGGNGKT) participates in ATP binding.

Belongs to the LpxK family.

The catalysed reaction is a lipid A disaccharide + ATP = a lipid IVA + ADP + H(+). It participates in glycolipid biosynthesis; lipid IV(A) biosynthesis; lipid IV(A) from (3R)-3-hydroxytetradecanoyl-[acyl-carrier-protein] and UDP-N-acetyl-alpha-D-glucosamine: step 6/6. Functionally, transfers the gamma-phosphate of ATP to the 4'-position of a tetraacyldisaccharide 1-phosphate intermediate (termed DS-1-P) to form tetraacyldisaccharide 1,4'-bis-phosphate (lipid IVA). This Cronobacter sakazakii (strain ATCC BAA-894) (Enterobacter sakazakii) protein is Tetraacyldisaccharide 4'-kinase.